Consider the following 397-residue polypeptide: Acid extracellular protease (397 aa).

An N-terminal signal peptide occupies residues 1-17 (MQFSLATLTTLLAFVAA). In terms of domain architecture, Peptidase A1 spans 61-378 (YQVQISLGGQ…DLERDEVSIA (318 aa)). The active site involves Asp-77. Asn-88 is a glycosylation site (N-linked (GlcNAc...) asparagine). Cys-93 and Cys-100 are disulfide-bonded. Asp-264 is an active-site residue. Cys-303 and Cys-343 are oxidised to a cystine. N-linked (GlcNAc...) asparagine glycans are attached at residues Asn-310 and Asn-314.

The protein belongs to the peptidase A1 family.

It localises to the secreted. This is Acid extracellular protease (AXP1) from Yarrowia lipolytica (strain CLIB 122 / E 150) (Yeast).